The sequence spans 315 residues: Methionyl-tRNA formyltransferase (315 aa).

107–110 contributes to the (6S)-5,6,7,8-tetrahydrofolate binding site; that stretch reads SLLP.

This sequence belongs to the Fmt family.

The catalysed reaction is L-methionyl-tRNA(fMet) + (6R)-10-formyltetrahydrofolate = N-formyl-L-methionyl-tRNA(fMet) + (6S)-5,6,7,8-tetrahydrofolate + H(+). Its function is as follows. Attaches a formyl group to the free amino group of methionyl-tRNA(fMet). The formyl group appears to play a dual role in the initiator identity of N-formylmethionyl-tRNA by promoting its recognition by IF2 and preventing the misappropriation of this tRNA by the elongation apparatus. The polypeptide is Methionyl-tRNA formyltransferase (Borreliella afzelii (strain PKo) (Borrelia afzelii)).